The sequence spans 395 residues: tRNA-specific 2-thiouridylase MnmA (395 aa).

Residues 7 to 14 (GLSGGVDS) and M33 contribute to the ATP site. Residues 95 to 97 (NPD) form an interaction with target base in tRNA region. C100 acts as the Nucleophile in catalysis. The cysteines at positions 100 and 200 are disulfide-linked. Position 124 (G124) interacts with ATP. The tract at residues 150 to 152 (KDQ) is interaction with tRNA. Catalysis depends on C200, which acts as the Cysteine persulfide intermediate. The interaction with tRNA stretch occupies residues 346-347 (RY).

It belongs to the MnmA/TRMU family.

It is found in the cytoplasm. It carries out the reaction S-sulfanyl-L-cysteinyl-[protein] + uridine(34) in tRNA + AH2 + ATP = 2-thiouridine(34) in tRNA + L-cysteinyl-[protein] + A + AMP + diphosphate + H(+). In terms of biological role, catalyzes the 2-thiolation of uridine at the wobble position (U34) of tRNA, leading to the formation of s(2)U34. This chain is tRNA-specific 2-thiouridylase MnmA, found in Flavobacterium johnsoniae (strain ATCC 17061 / DSM 2064 / JCM 8514 / BCRC 14874 / CCUG 350202 / NBRC 14942 / NCIMB 11054 / UW101) (Cytophaga johnsonae).